The sequence spans 409 residues: ORC1-type DNA replication protein 1 (409 aa).

ATP-binding positions include 63–67 (TGKTA), Tyr-206, and Arg-218.

This sequence belongs to the CDC6/cdc18 family.

In terms of biological role, involved in regulation of DNA replication. This chain is ORC1-type DNA replication protein 1 (cdc6-1), found in Archaeoglobus fulgidus (strain ATCC 49558 / DSM 4304 / JCM 9628 / NBRC 100126 / VC-16).